The primary structure comprises 276 residues: NADPH-dependent 7-cyano-7-deazaguanine reductase (276 aa).

I83–S85 contacts substrate. S85–K86 is a binding site for NADPH. C184 functions as the Thioimide intermediate in the catalytic mechanism. The active-site Proton donor is D191. Residue H223 to E224 coordinates substrate. Residue R252–G253 coordinates NADPH.

Belongs to the GTP cyclohydrolase I family. QueF type 2 subfamily. Homodimer.

It is found in the cytoplasm. It catalyses the reaction 7-aminomethyl-7-carbaguanine + 2 NADP(+) = 7-cyano-7-deazaguanine + 2 NADPH + 3 H(+). Its pathway is tRNA modification; tRNA-queuosine biosynthesis. Catalyzes the NADPH-dependent reduction of 7-cyano-7-deazaguanine (preQ0) to 7-aminomethyl-7-deazaguanine (preQ1). This is NADPH-dependent 7-cyano-7-deazaguanine reductase from Pseudomonas aeruginosa (strain ATCC 15692 / DSM 22644 / CIP 104116 / JCM 14847 / LMG 12228 / 1C / PRS 101 / PAO1).